Reading from the N-terminus, the 507-residue chain is MEELQRYFEIDRFRQQYFIYPFLFQEYIYALAHYYALNGSIFYETMENFGYDNKSSSLIVKRLITRMHRQNRLIISINDSNQNRFIGHSKNLYTQTLSEGFAVIMEIPFSLQLVFSLEEKEITKSHNLRSIHSIFPFFEDKLSHLNHVSHILIPYPAHLEILVQILHSWIQDAPSLHLLRFFLHDYQNSNSLKARKKSISVCSKENRRFFLFIYNFHVYECESVFVFLRKQSFHLRSTSFGTVLERTHFYGKIEHLVVVLRNDFQKTLWFFKDPFMHYVRYQGNSLLASKGTHFHMKKWKSYLVYFWQSHFCLWSQPDRIHINQLYNHSFYFLGFLSNVRQNSSAVRSQMLENSFLIDTSIKKFETLIPTIPLIGSLAKAKFCNVSGHPISKPARADSSDSDIISRFGRIYRNLSHYYSGSSKKQTLYRIKYILRLSCARTLARKHKSTVRAFLKELGSPFLEEFLMEEEQVLSLIFPRTPSPSYRSHRERIWYLDIICINILTNHV.

This sequence belongs to the intron maturase 2 family. MatK subfamily.

It localises to the plastid. Its subcellular location is the chloroplast. Usually encoded in the trnK tRNA gene intron. Probably assists in splicing its own and other chloroplast group II introns. The sequence is that of Maturase K from Asimina triloba (Pawpaw).